An 866-amino-acid chain; its full sequence is DNA topoisomerase 3-beta (866 aa).

Residues 4 to 149 (TVLMVAEKPS…RIFRAKFSSV (146 aa)) form the Toprim domain. The Mg(2+) site is built by E10, D114, and D116. The region spanning 165–585 (SKDEALAVDA…HVLQQFMKKY (421 aa)) is the Topo IA-type catalytic domain. Residues 207 to 212 (SYGPCQ) are interaction with DNA. The O-(5'-phospho-DNA)-tyrosine intermediate role is filled by Y329. Residues 830-853 (MRRGRGRGRGRGRGRGSSRGRRGS) are compositionally biased toward basic residues. The interval 830–866 (MRRGRGRGRGRGRGRGSSRGRRGSSRHDDPKMSFRDF) is disordered. Basic and acidic residues predominate over residues 854–866 (SRHDDPKMSFRDF).

This sequence belongs to the type IA topoisomerase family. Mg(2+) serves as cofactor.

It catalyses the reaction ATP-independent breakage of single-stranded DNA, followed by passage and rejoining.. Releases the supercoiling and torsional tension of DNA introduced during the DNA replication and transcription by transiently cleaving and rejoining one strand of the DNA duplex. Introduces a single-strand break via transesterification at a target site in duplex DNA. The scissile phosphodiester is attacked by the catalytic tyrosine of the enzyme, resulting in the formation of a DNA-(5'-phosphotyrosyl)-enzyme intermediate and the expulsion of a 3'-OH DNA strand. The free DNA strand than undergoes passage around the unbroken strand thus removing DNA supercoils. Finally, in the religation step, the DNA 3'-OH attacks the covalent intermediate to expel the active-site tyrosine and restore the DNA phosphodiester backbone. The polypeptide is DNA topoisomerase 3-beta (TOP3B) (Oryza sativa subsp. japonica (Rice)).